An 865-amino-acid chain; its full sequence is Carbohydrate-responsive element-binding protein (865 aa).

Disordered regions lie at residues 15-41 (PRVV…AGGL) and 53-77 (MVSS…LADF). Phosphoserine is present on residues S20, S23, and S25. T27 is modified (phosphothreonine). S196 bears the Phosphoserine mark. Disordered regions lie at residues 334 to 392 (GILG…TKMP) and 500 to 653 (QPRC…LSRG). Over residues 351-368 (GMTPLSGNTRLQARNSCS) the composition is skewed to polar residues. A compositionally biased stretch (low complexity) spans 515–533 (ASPPTLTSATASPTATATA). S568 carries the post-translational modification Phosphoserine; by AMPK. The span at 583 to 597 (PPIPAPTPPRPPPGP) shows a compositional bias: pro residues. 3 positions are modified to phosphoserine: S615, S627, and S644. A bHLH domain is found at 662–716 (NRRITHISAEQKRRFNIKLGFDTLHGLVSTLSAQPSLKVSKATTLQKTAEYILML). The tract at residues 716-737 (LQQERAAMQEEAQQLRDEIEEL) is leucine-zipper.

Binds DNA as a heterodimer with TCFL4/MLX. Post-translationally, phosphorylation at Ser-568 by AMPK inactivates the DNA-binding activity.

The protein localises to the nucleus. Transcriptional repressor. Binds to the canonical and non-canonical E box sequences 5'-CACGTG-3'. In Rattus norvegicus (Rat), this protein is Carbohydrate-responsive element-binding protein (Mlxipl).